A 714-amino-acid chain; its full sequence is Fatty acid oxidation complex subunit alpha (714 aa).

Residues 1 to 190 are enoyl-CoA hydratase; sequence MDTVSAFKLE…KAGLVDEVVP (190 aa). The interval 306–714 is 3-hydroxyacyl-CoA dehydrogenase; that stretch reads GSLRSVAVLG…TFWPADERLT (409 aa).

In the N-terminal section; belongs to the enoyl-CoA hydratase/isomerase family. It in the central section; belongs to the 3-hydroxyacyl-CoA dehydrogenase family. In terms of assembly, heterotetramer of two alpha chains (FadJ) and two beta chains (FadI).

Its subcellular location is the cytoplasm. It catalyses the reaction a (3S)-3-hydroxyacyl-CoA = a (2E)-enoyl-CoA + H2O. It carries out the reaction a 4-saturated-(3S)-3-hydroxyacyl-CoA = a (3E)-enoyl-CoA + H2O. The enzyme catalyses a (3S)-3-hydroxyacyl-CoA + NAD(+) = a 3-oxoacyl-CoA + NADH + H(+). The catalysed reaction is (3S)-3-hydroxybutanoyl-CoA = (3R)-3-hydroxybutanoyl-CoA. Its pathway is lipid metabolism; fatty acid beta-oxidation. In terms of biological role, catalyzes the formation of a hydroxyacyl-CoA by addition of water on enoyl-CoA. Also exhibits 3-hydroxyacyl-CoA epimerase and 3-hydroxyacyl-CoA dehydrogenase activities. The chain is Fatty acid oxidation complex subunit alpha from Klebsiella pneumoniae subsp. pneumoniae (strain ATCC 700721 / MGH 78578).